A 416-amino-acid polypeptide reads, in one-letter code: POC1 centriolar protein homolog A (416 aa).

WD repeat units follow at residues 16–55 (GHRD…RAYR), 58–97 (GHKD…ESVL), 100–139 (AHTG…IICT), 142–181 (EHNN…LIHT), 184–223 (EPGG…LLQH), 226–265 (VHSA…LLYT), and 268–307 (GHQG…VDYS). Positions 311–340 (QQKRDHRTPSAQASGAAGDPESRSGQKTEV) are disordered. Residues 380–412 (QLDVLTQTVAILEQRLTLTEDKLKECLEQQHQA) are a coiled coil.

Belongs to the WD repeat POC1 family.

Functionally, may play an important role in centriole assembly and/or stability and ciliogenesis. This chain is POC1 centriolar protein homolog A, found in Danio rerio (Zebrafish).